A 259-amino-acid polypeptide reads, in one-letter code: 3'-5' ssDNA/RNA exonuclease TatD (259 aa).

A divalent metal cation is bound by residues Glu92, His128, and His153.

The protein belongs to the metallo-dependent hydrolases superfamily. TatD-type hydrolase family. TatD subfamily. In terms of assembly, monomer. Requires Mg(2+) as cofactor.

Its subcellular location is the cytoplasm. In terms of biological role, 3'-5' exonuclease that prefers single-stranded DNA and RNA. May play a role in the H(2)O(2)-induced DNA damage repair. This is 3'-5' ssDNA/RNA exonuclease TatD from Erwinia amylovora (strain ATCC 49946 / CCPPB 0273 / Ea273 / 27-3).